Here is a 66-residue protein sequence, read N- to C-terminus: uncharacterized protein (66 aa).

This is an uncharacterized protein from Chlamydia pneumoniae (Chlamydophila pneumoniae).